The primary structure comprises 425 residues: Inhibin beta A chain (425 aa).

Positions 1-20 are cleaved as a signal peptide; that stretch reads MPLLWLRGFLLASCWIIVRS. The propeptide occupies 21–309; sequence SPTPGSEGHS…EDHPHRRRRR (289 aa). N-linked (GlcNAc...) asparagine glycosylation is present at N165. The tract at residues 259–289 is disordered; that stretch reads KKKKKEEEGEGKKRDGEGGAGGDEEKEQSHR. A compositionally biased stretch (basic and acidic residues) spans 263–275; the sequence is KEEEGEGKKRDGE. Disulfide bonds link C313/C321, C320/C390, C349/C422, and C353/C424.

This sequence belongs to the TGF-beta family. Dimeric, linked by one or more disulfide bonds. Inhibin A is a dimer of alpha/INHA and beta-A/INHBA. Activin A is a homodimer of beta-A/INHBA. Activin AB is a dimer of beta-A/INHBA and beta-B/INHBB. Interacts with FST and FSTL3; these interactions prevent activin A interaction to its type II receptor. Activin A interacts with ACVR2A. Activin A interacts with BMPR2. Inhibin A interacts with ACVR1; this interaction creates a non-signaling complex (NSC) that inhibits ACVR1-mediated BMP signaling. Inhibin A interacts with ACVR2A.

Its subcellular location is the secreted. Functionally, inhibins/activins are involved in regulating a number of diverse functions such as hypothalamic and pituitary hormone secretion, gonadal hormone secretion, germ cell development and maturation, erythroid differentiation, insulin secretion, nerve cell survival, embryonic axial development or bone growth, depending on their subunit composition. Activin A is a homodimer of INHBA that plays a role in several essential biological processes including embryonic development, stem cell maintenance and differentiation, haematopoiesis, cell proliferation and tissue fibrosis. Signals through type I (such as ACVR1B or ACVR1C) and type II receptors (such as ACVR2A, ACVR2B or BMPR2) which, upon ligand binding, phosphorylate SMAD2 and SMAD3 intracellular signaling mediators that form a complex with SMAD4, translocate to the nucleus and modulate gene expression. Can also activate alternative non-canonical intracellular signaling pathways including the p38 MAPK, extracellular signal-regulated kinases 1/2 (ERK1/2) and c-Jun N-terminal kinases (JNKs) to modulate cell migration and differentiation. Alternatively, promotes osteoblastic differentiation via ACVRL1-SMAD1/5/9 pathway. In addition, can engage the type I receptor ACVR1 to form an ACVR1-activin A-type II receptor non-signaling complex (NSC) that renders receptors unavailable for engagement with BMPs, hence resulting in an apparent inhibition of ACVR1-mediated BMP signaling. Its function is as follows. Inhibin A is a dimer of alpha/INHA and beta-A/INHBA that functions as a feedback regulator in the hypothalamic-pituitary-gonadal (HPG) axis. Inhibits the secretion of FSH from the anterior pituitary gland by acting on pituitary gonadotrope cells. Antagonizes activin A by binding to the proteoglycan, betaglycan, and forming a stable complex with and, thereby, sequestering type II activin receptors while excluding type I receptor. The polypeptide is Inhibin beta A chain (INHBA) (Bos taurus (Bovine)).